The sequence spans 407 residues: MSRYHTFTAADAVEYARQFGQVADPQALVTADEIGDGNLNLVFKIRDTAGISRVIVKQALPYVRCVGESWPLTLDRARIEAETLLTHSQFCPQHTVKVLHHDAELAVMVQEDLSDHHIWRHELIQGNYYPQAAEQLGEYLAQTLFHTSDFYQSAQAKKAAVSRYTNPELCQITEDLFFTDPYIDHERNNFDPVLLPEVLSLRQDKALKLAVASLKHRFLSQAEALLHGDIHSGSIFVADGRLKTIDAEFGFYGPIGFDIGTALGNLLLNYCGLPGLAGPRDAAAGREQRLKDVQTVWQTFAARFLALSQEKTQDPALATEGYATQFLQHVWRDAIGYCGSELIRRTIGLAHVADLDSIDDEEMRRACQRHALSLGRALILVAPHVDDVGGVVARIRQSPSSLTPQRC.

ATP contacts are provided by residues Asn40, Lys57, and 111-113 (EDL). Asp229 is a substrate binding site. Residue 246–248 (DAE) coordinates ATP. Position 344 (Arg344) interacts with substrate.

It belongs to the methylthioribose kinase family. Homodimer.

It catalyses the reaction 5-(methylsulfanyl)-D-ribose + ATP = 5-(methylsulfanyl)-alpha-D-ribose 1-phosphate + ADP + H(+). Its pathway is amino-acid biosynthesis; L-methionine biosynthesis via salvage pathway; S-methyl-5-thio-alpha-D-ribose 1-phosphate from S-methyl-5'-thioadenosine (hydrolase route): step 2/2. Functionally, catalyzes the phosphorylation of methylthioribose into methylthioribose-1-phosphate. This Yersinia pseudotuberculosis serotype IB (strain PB1/+) protein is Methylthioribose kinase.